Consider the following 502-residue polypeptide: Lanosterol 14-alpha demethylase (502 aa).

Residues 22–42 traverse the membrane as a helical segment; sequence GNLASMLLIACAFTLSLVYLF. C448 lines the heme pocket.

The protein belongs to the cytochrome P450 family. Heme is required as a cofactor. Post-translationally, ubiquitinated by MARCHF6, leading to proteasomal degradation.

Its subcellular location is the endoplasmic reticulum membrane. The protein resides in the microsome membrane. The catalysed reaction is a 14alpha-methyl steroid + 3 reduced [NADPH--hemoprotein reductase] + 3 O2 = a Delta(14) steroid + formate + 3 oxidized [NADPH--hemoprotein reductase] + 4 H2O + 4 H(+). The enzyme catalyses lanosterol + 3 reduced [NADPH--hemoprotein reductase] + 3 O2 = 4,4-dimethyl-5alpha-cholesta-8,14,24-trien-3beta-ol + formate + 3 oxidized [NADPH--hemoprotein reductase] + 4 H2O + 4 H(+). It carries out the reaction 24,25-dihydrolanosterol + 3 reduced [NADPH--hemoprotein reductase] + 3 O2 = 4,4-dimethyl-8,14-cholestadien-3beta-ol + formate + 3 oxidized [NADPH--hemoprotein reductase] + 4 H2O + 4 H(+). It catalyses the reaction a 14alpha-methyl steroid + reduced [NADPH--hemoprotein reductase] + O2 = a 14alpha-hydroxymethyl steroid + oxidized [NADPH--hemoprotein reductase] + H2O + H(+). The catalysed reaction is a 14alpha-hydroxymethyl steroid + reduced [NADPH--hemoprotein reductase] + O2 = a 14alpha-formyl steroid + oxidized [NADPH--hemoprotein reductase] + 2 H2O + H(+). The enzyme catalyses a 14alpha-formyl steroid + reduced [NADPH--hemoprotein reductase] + O2 = a Delta(14) steroid + formate + oxidized [NADPH--hemoprotein reductase] + H2O + 2 H(+). It carries out the reaction lanosterol + reduced [NADPH--hemoprotein reductase] + O2 = 32-hydroxylanosterol + oxidized [NADPH--hemoprotein reductase] + H2O + H(+). It catalyses the reaction 32-hydroxylanosterol + reduced [NADPH--hemoprotein reductase] + O2 = 32-oxolanosterol + oxidized [NADPH--hemoprotein reductase] + 2 H2O + H(+). The catalysed reaction is 32-oxolanosterol + reduced [NADPH--hemoprotein reductase] + O2 = 4,4-dimethyl-5alpha-cholesta-8,14,24-trien-3beta-ol + formate + oxidized [NADPH--hemoprotein reductase] + H2O + 2 H(+). The enzyme catalyses 24,25-dihydrolanosterol + reduced [NADPH--hemoprotein reductase] + O2 = 32-hydroxy-24,25-dihydrolanosterol + oxidized [NADPH--hemoprotein reductase] + H2O + H(+). It carries out the reaction 32-hydroxy-24,25-dihydrolanosterol + reduced [NADPH--hemoprotein reductase] + O2 = 32-oxo-24,25-dihydrolanosterol + oxidized [NADPH--hemoprotein reductase] + 2 H2O + H(+). It catalyses the reaction 32-oxo-24,25-dihydrolanosterol + reduced [NADPH--hemoprotein reductase] + O2 = 4,4-dimethyl-8,14-cholestadien-3beta-ol + formate + oxidized [NADPH--hemoprotein reductase] + H2O + 2 H(+). The protein operates within steroid biosynthesis; zymosterol biosynthesis; zymosterol from lanosterol: step 1/6. Its activity is regulated as follows. Inhibited by azalanstat. Inhibited by azole antifungal agents ketoconazole, itraconazole and fluconazole. Its function is as follows. Sterol 14alpha-demethylase that plays a critical role in the cholesterol biosynthesis pathway, being cholesterol the major sterol component in mammalian membranes as well as a precursor for bile acid and steroid hormone synthesis. Cytochrome P450 monooxygenase that catalyzes the three-step oxidative removal of the 14alpha-methyl group (C-32) of sterols such as lanosterol (lanosta-8,24-dien-3beta-ol) and 24,25-dihydrolanosterol (DHL) in the form of formate, and converts the sterols to 4,4-dimethyl-5alpha-cholesta-8,14,24-trien-3beta-ol and 4,4-dimethyl-8,14-cholestadien-3beta-ol, respectively, which are intermediates of cholesterol biosynthesis. Can also demethylate substrates not intrinsic to mammals, such as eburicol (24-methylene-24,25-dihydrolanosterol), but at a lower rate than DHL. This chain is Lanosterol 14-alpha demethylase, found in Bos taurus (Bovine).